A 254-amino-acid polypeptide reads, in one-letter code: Alcohol dehydrogenase (254 aa).

Residue 10 to 33 (FVAGLGGIGLDTSREIVKSGPKNL) participates in NAD(+) binding. Residue serine 138 participates in substrate binding. Catalysis depends on tyrosine 151, which acts as the Proton acceptor.

This sequence belongs to the short-chain dehydrogenases/reductases (SDR) family. In terms of assembly, homodimer.

It catalyses the reaction a primary alcohol + NAD(+) = an aldehyde + NADH + H(+). The enzyme catalyses a secondary alcohol + NAD(+) = a ketone + NADH + H(+). In Drosophila mimica (Fruit fly), this protein is Alcohol dehydrogenase (Adh).